Consider the following 1777-residue polypeptide: Fatty acid synthase subunit alpha (1777 aa).

The segment at 101–124 (APVESADNEPAQPAASSTPAAPAP) is disordered. Over residues 110 to 120 (PAQPAASSTPA) the composition is skewed to low complexity. A Carrier domain is found at 151–237 (LSAIDVVISI…KVMGGHIDRL (87 aa)). Ser-186 is subject to O-(pantetheine 4'-phosphoryl)serine. The ketoreductase (KR) domain stretch occupies residues 563 to 803 (FTGRRVLVTG…ILSLLSGDIL (241 aa)). In terms of domain architecture, Ketosynthase family 3 (KS3) spans 1007 to 1539 (KEIMHEVVID…QKGGLVVGIA (533 aa)). Residues Cys-1193, His-1424, and His-1465 each act as for beta-ketoacyl synthase activity in the active site. Asp-1661 lines the Mg(2+) pocket. Residues 1661-1663 (DIE), 1706-1716 (EAIFKSLQIPS), 1730-1734 (SNGAQ), and 1760-1762 (ITH) contribute to the acetyl-CoA site.

It belongs to the thiolase-like superfamily. Fungal fatty acid synthetase subunit alpha family. As to quaternary structure, fatty acid synthase is composed of alpha and beta subunits.

The catalysed reaction is acetyl-CoA + n malonyl-CoA + 2n NADPH + 4n H(+) = a long-chain-acyl-CoA + n CoA + n CO2 + 2n NADP(+).. The enzyme catalyses a fatty acyl-[ACP] + malonyl-[ACP] + H(+) = a 3-oxoacyl-[ACP] + holo-[ACP] + CO2. It carries out the reaction a (3R)-hydroxyacyl-[ACP] + NADP(+) = a 3-oxoacyl-[ACP] + NADPH + H(+). The protein operates within secondary metabolite biosynthesis. Fatty acid synthase alpha subunit; part of the gene cluster that mediates the biosynthesis of oryzines, natural products with an unusual maleidride backbone. The two subunits of the fungal fatty acid synthase oryfasA and oryfasB probably form octenoic acid. This fatty acid is most likely activated by the acyl-CoA ligase oryP to give octenyl-CoA before the citrate synthase-like protein oryE catalyzes condensation with oxaloacetate to form tricarboxylic acid. The next steps of the pathways are conjectural, but a favorite possible route has been proposed, beginning with decarboxylation and concomitant dehydration by the decarboxylase oryM, followed by tautomerization, which may lead to the production of a diene intermediate. Reduction of this diene intermediate could give the known metabolite piliformic acid. On the pathway to oryzine B and oryzine A, however, hydroxylation of the diene by the alpha-ketoglutarate-dependent dioxygenase oryG and lactonisation by the lactonohydrolases oryH or oryL could give oryzine B directly. Finally, enoyl reduction by the dehydrogenase oryD would then convert oryzine B into oryzine A. This Aspergillus oryzae (strain ATCC 42149 / RIB 40) (Yellow koji mold) protein is Fatty acid synthase subunit alpha.